The sequence spans 216 residues: Transmembrane protein 163a (216 aa).

Residues methionine 1 to alanine 15 lie on the Cytoplasmic side of the membrane. A helical transmembrane segment spans residues leucine 16 to valine 36. Residues serine 37–alanine 43 lie on the Extracellular side of the membrane. Residues serine 44 to tryptophan 64 form a helical membrane-spanning segment. Over arginine 65–arginine 77 the chain is Cytoplasmic. The chain crosses the membrane as a helical span at residues glutamate 78–glycine 98. Topologically, residues lysine 99–aspartate 114 are extracellular. Residues phenylalanine 115 to phenylalanine 135 form a helical membrane-spanning segment. Residues methionine 136–arginine 144 lie on the Cytoplasmic side of the membrane. The helical transmembrane segment at alanine 145–isoleucine 165 threads the bilayer. The Extracellular segment spans residues serine 166 to threonine 182. The helical transmembrane segment at isoleucine 183 to isoleucine 203 threads the bilayer. Topologically, residues proline 204–glutamate 216 are cytoplasmic.

This sequence belongs to the TMEM163 family.

The protein localises to the cytoplasmic vesicle. The protein resides in the secretory vesicle. It localises to the synaptic vesicle membrane. Its subcellular location is the early endosome membrane. It is found in the late endosome membrane. The protein localises to the lysosome membrane. The protein resides in the cell membrane. It catalyses the reaction Zn(2+)(in) = Zn(2+)(out). Functionally, zinc ion transporter that mediates zinc efflux and plays a crucial role in intracellular zinc homeostasis. Binds the divalent cations Zn(2+), Ni(2+), and to a minor extent Cu(2+). Is a functional modulator of P2X purinoceptors, including P2RX1, P2RX3, P2RX4 and P2RX7. Plays a role in central nervous system development and is required for myelination, and survival and proliferation of oligodendrocytes. This Danio rerio (Zebrafish) protein is Transmembrane protein 163a.